The chain runs to 114 residues: Large ribosomal subunit protein bL21c (114 aa).

Belongs to the bacterial ribosomal protein bL21 family. Part of the 50S ribosomal subunit.

The protein resides in the plastid. Its subcellular location is the chloroplast. In terms of biological role, this protein binds to 23S rRNA. The sequence is that of Large ribosomal subunit protein bL21c from Staurastrum punctulatum (Green alga).